The primary structure comprises 848 residues: Translation initiation factor IF-2 (848 aa).

A disordered region spans residues 106-150; that stretch reads TEQQTEAENSTNINLSEQTIKNNSHQSSSNTIETTQEKKQNDDLS. The segment covering 112–139 has biased composition (polar residues); it reads AENSTNINLSEQTIKNNSHQSSSNTIET. The region spanning 347-517 is the tr-type G domain; sequence PRAPIITVMG…LLLADMLELK (171 aa). Residues 356–363 are G1; the sequence is GHVDHGKT. 356–363 is a binding site for GTP; the sequence is GHVDHGKT. The tract at residues 381 to 385 is G2; the sequence is GITQH. The G3 stretch occupies residues 403-406; sequence DTPG. GTP-binding positions include 403–407 and 457–460; these read DTPGH and NKID. The interval 457–460 is G4; that stretch reads NKID. A G5 region spans residues 493 to 495; that stretch reads SAL.

Belongs to the TRAFAC class translation factor GTPase superfamily. Classic translation factor GTPase family. IF-2 subfamily.

It is found in the cytoplasm. In terms of biological role, one of the essential components for the initiation of protein synthesis. Protects formylmethionyl-tRNA from spontaneous hydrolysis and promotes its binding to the 30S ribosomal subunits. Also involved in the hydrolysis of GTP during the formation of the 70S ribosomal complex. The polypeptide is Translation initiation factor IF-2 (Orientia tsutsugamushi (strain Boryong) (Rickettsia tsutsugamushi)).